The chain runs to 545 residues: CTP synthase (545 aa).

The interval 1–264 is amidoligase domain; sequence MQYIVVTGGV…ITRLSKLLNM (264 aa). CTP is bound at residue S12. Position 12 (S12) interacts with UTP. Residue 13–18 coordinates ATP; the sequence is GLGKGT. Y53 serves as a coordination point for L-glutamine. An ATP-binding site is contributed by D70. Positions 70 and 140 each coordinate Mg(2+). Residues 147–149, 185–190, and R221 contribute to the CTP site; these read DIE and KTKPTQ. UTP contacts are provided by residues 185–190 and R221; that span reads KTKPTQ. The region spanning 294–527 is the Glutamine amidotransferase type-1 domain; sequence YVDLHDAYIS…VEQALIFKHR (234 aa). G347 provides a ligand contact to L-glutamine. The Nucleophile; for glutamine hydrolysis role is filled by C374. Residues 375–378, E398, and R455 contribute to the L-glutamine site; that span reads LGFQ. Catalysis depends on residues H500 and E502.

Belongs to the CTP synthase family. As to quaternary structure, homotetramer.

It carries out the reaction UTP + L-glutamine + ATP + H2O = CTP + L-glutamate + ADP + phosphate + 2 H(+). The enzyme catalyses L-glutamine + H2O = L-glutamate + NH4(+). The catalysed reaction is UTP + NH4(+) + ATP = CTP + ADP + phosphate + 2 H(+). Its pathway is pyrimidine metabolism; CTP biosynthesis via de novo pathway; CTP from UDP: step 2/2. Allosterically activated by GTP, when glutamine is the substrate; GTP has no effect on the reaction when ammonia is the substrate. The allosteric effector GTP functions by stabilizing the protein conformation that binds the tetrahedral intermediate(s) formed during glutamine hydrolysis. Inhibited by the product CTP, via allosteric rather than competitive inhibition. Functionally, catalyzes the ATP-dependent amination of UTP to CTP with either L-glutamine or ammonia as the source of nitrogen. Regulates intracellular CTP levels through interactions with the four ribonucleotide triphosphates. The sequence is that of CTP synthase from Thermoplasma acidophilum (strain ATCC 25905 / DSM 1728 / JCM 9062 / NBRC 15155 / AMRC-C165).